The following is a 163-amino-acid chain: Large ribosomal subunit protein bL17 (163 aa).

The segment covering 123 to 135 (AEASRATRASASK) has biased composition (low complexity). A disordered region spans residues 123 to 163 (AEASRATRASASKKAAEEAETEEVVEAPAEETATEEAAEEK). Over residues 140–163 (EAETEEVVEAPAEETATEEAAEEK) the composition is skewed to acidic residues.

This sequence belongs to the bacterial ribosomal protein bL17 family. In terms of assembly, part of the 50S ribosomal subunit. Contacts protein L32.

In Corynebacterium glutamicum (strain ATCC 13032 / DSM 20300 / JCM 1318 / BCRC 11384 / CCUG 27702 / LMG 3730 / NBRC 12168 / NCIMB 10025 / NRRL B-2784 / 534), this protein is Large ribosomal subunit protein bL17.